Here is a 228-residue protein sequence, read N- to C-terminus: Urease accessory protein UreF 1 (228 aa).

The protein belongs to the UreF family. UreD, UreF and UreG form a complex that acts as a GTP-hydrolysis-dependent molecular chaperone, activating the urease apoprotein by helping to assemble the nickel containing metallocenter of UreC. The UreE protein probably delivers the nickel.

Its subcellular location is the cytoplasm. Functionally, required for maturation of urease via the functional incorporation of the urease nickel metallocenter. In terms of biological role, disruption of the ure1 gene cluster suggests that it protects brucellae during their passage through the stomach. The major route of infection in human brucellosis is oral. This chain is Urease accessory protein UreF 1, found in Brucella abortus (strain 2308).